The following is a 108-amino-acid chain: Nascent polypeptide-associated complex protein (108 aa).

The NAC-A/B domain occupies 1-68 (MNPREIRRMM…LREVKKEVEQ (68 aa)).

This sequence belongs to the NAC-alpha family. As to quaternary structure, homodimer. Interacts with the ribosome. Binds ribosomal RNA.

Contacts the emerging nascent chain on the ribosome. The polypeptide is Nascent polypeptide-associated complex protein (Picrophilus torridus (strain ATCC 700027 / DSM 9790 / JCM 10055 / NBRC 100828 / KAW 2/3)).